A 448-amino-acid chain; its full sequence is Putative RNA-ligase (448 aa).

This sequence belongs to the asfivirus M448R family.

The protein resides in the virion. The polypeptide is Putative RNA-ligase (Ornithodoros (relapsing fever ticks)).